The chain runs to 199 residues: Protein-methionine-sulfoxide reductase heme-binding subunit MsrQ (199 aa).

6 helical membrane passes run 8–28 (IAWL…WLFW), 54–74 (FLLA…PLLI), 82–102 (LWCF…ELGI), 116–136 (PYLT…ATST), 149–169 (LLHN…LWSV), and 171–191 (IVSP…ACRY).

The protein belongs to the MsrQ family. In terms of assembly, heterodimer of a catalytic subunit (MsrP) and a heme-binding subunit (MsrQ). FMN serves as cofactor. The cofactor is heme b.

It is found in the cell inner membrane. Functionally, part of the MsrPQ system that repairs oxidized periplasmic proteins containing methionine sulfoxide residues (Met-O), using respiratory chain electrons. Thus protects these proteins from oxidative-stress damage caused by reactive species of oxygen and chlorine generated by the host defense mechanisms. MsrPQ is essential for the maintenance of envelope integrity under bleach stress, rescuing a wide series of structurally unrelated periplasmic proteins from methionine oxidation. MsrQ provides electrons for reduction to the reductase catalytic subunit MsrP, using the quinone pool of the respiratory chain. The polypeptide is Protein-methionine-sulfoxide reductase heme-binding subunit MsrQ (Klebsiella pneumoniae (strain 342)).